Consider the following 180-residue polypeptide: Large ribosomal subunit protein uL5 (180 aa).

The protein belongs to the universal ribosomal protein uL5 family. As to quaternary structure, part of the 50S ribosomal subunit; part of the 5S rRNA/L5/L18/L25 subcomplex. Contacts the 5S rRNA and the P site tRNA. Forms a bridge to the 30S subunit in the 70S ribosome.

In terms of biological role, this is one of the proteins that bind and probably mediate the attachment of the 5S RNA into the large ribosomal subunit, where it forms part of the central protuberance. In the 70S ribosome it contacts protein S13 of the 30S subunit (bridge B1b), connecting the 2 subunits; this bridge is implicated in subunit movement. Contacts the P site tRNA; the 5S rRNA and some of its associated proteins might help stabilize positioning of ribosome-bound tRNAs. In Xanthomonas campestris pv. campestris (strain 8004), this protein is Large ribosomal subunit protein uL5.